We begin with the raw amino-acid sequence, 395 residues long: S-adenosylmethionine synthase (395 aa).

His16 is an ATP binding site. Asp18 lines the Mg(2+) pocket. Glu44 lines the K(+) pocket. 2 residues coordinate L-methionine: Glu57 and Gln100. The segment at 100–110 (QSPDIAQGVDR) is flexible loop. ATP is bound by residues 167-169 (DAK), 233-234 (RF), Asp242, 248-249 (RK), Ala265, and Lys269. Asp242 is an L-methionine binding site. An L-methionine-binding site is contributed by Lys273.

This sequence belongs to the AdoMet synthase family. In terms of assembly, homotetramer; dimer of dimers. The cofactor is Mg(2+). K(+) is required as a cofactor.

It is found in the cytoplasm. The catalysed reaction is L-methionine + ATP + H2O = S-adenosyl-L-methionine + phosphate + diphosphate. It participates in amino-acid biosynthesis; S-adenosyl-L-methionine biosynthesis; S-adenosyl-L-methionine from L-methionine: step 1/1. Catalyzes the formation of S-adenosylmethionine (AdoMet) from methionine and ATP. The overall synthetic reaction is composed of two sequential steps, AdoMet formation and the subsequent tripolyphosphate hydrolysis which occurs prior to release of AdoMet from the enzyme. This Burkholderia cenocepacia (strain ATCC BAA-245 / DSM 16553 / LMG 16656 / NCTC 13227 / J2315 / CF5610) (Burkholderia cepacia (strain J2315)) protein is S-adenosylmethionine synthase.